The chain runs to 172 residues: Trypsin inhibitor DE-3 (172 aa).

2 cysteine pairs are disulfide-bonded: Cys-39-Cys-83 and Cys-132-Cys-139.

This sequence belongs to the protease inhibitor I3 (leguminous Kunitz-type inhibitor) family.

Inhibition of trypsin. This chain is Trypsin inhibitor DE-3, found in Erythrina variegata (Indian coral tree).